The sequence spans 473 residues: Photosystem II CP43 reaction center protein (473 aa).

Residues 1–14 (MKNLYSLRRFYHVE) constitute a propeptide that is removed on maturation. Position 15 is an N-acetylthreonine (threonine 15). Threonine 15 carries the post-translational modification Phosphothreonine. The next 5 membrane-spanning stretches (helical) occupy residues 69–93 (LFEV…PHLA), 134–155 (LVGP…KDKN), 178–200 (KAMY…RIIS), 255–275 (KPWA…LSYS), and 291–312 (WFNT…ASQS). Glutamate 367 lines the [CaMn4O5] cluster pocket. The helical transmembrane segment at 447–471 (RARAAAAGFEKGIDRDNEPVLSMRP) threads the bilayer.

Belongs to the PsbB/PsbC family. PsbC subfamily. PSII is composed of 1 copy each of membrane proteins PsbA, PsbB, PsbC, PsbD, PsbE, PsbF, PsbH, PsbI, PsbJ, PsbK, PsbL, PsbM, PsbT, PsbX, PsbY, PsbZ, Psb30/Ycf12, at least 3 peripheral proteins of the oxygen-evolving complex and a large number of cofactors. It forms dimeric complexes. It depends on Binds multiple chlorophylls and provides some of the ligands for the Ca-4Mn-5O cluster of the oxygen-evolving complex. It may also provide a ligand for a Cl- that is required for oxygen evolution. PSII binds additional chlorophylls, carotenoids and specific lipids. as a cofactor.

It is found in the plastid. The protein resides in the chloroplast thylakoid membrane. One of the components of the core complex of photosystem II (PSII). It binds chlorophyll and helps catalyze the primary light-induced photochemical processes of PSII. PSII is a light-driven water:plastoquinone oxidoreductase, using light energy to abstract electrons from H(2)O, generating O(2) and a proton gradient subsequently used for ATP formation. In Chlorella vulgaris (Green alga), this protein is Photosystem II CP43 reaction center protein.